Consider the following 358-residue polypeptide: DnaJ homolog subfamily C member 18 (358 aa).

A J domain is found at 82–146 (NYYEILGVSR…DKRLRYDEYG (65 aa)). A helical transmembrane segment spans residues 228–248 (AFIQLLPVLVIVIISVITQLL).

The protein localises to the endoplasmic reticulum membrane. In terms of biological role, (Microbial infection) In case of infection by polyomavirus, involved in the virus endoplasmic reticulum membrane penetration and infection. Regulates the recruitment of DNAJB12:DNAJB14 into SV40-induced foci and all cooperate to guide SV40 across the endoplasmic reticulum membrane. The foci represent the site from which SV40 penetrates into the cytosol. The chain is DnaJ homolog subfamily C member 18 from Homo sapiens (Human).